The chain runs to 455 residues: UDP-glycosyltransferase 75B2 (455 aa).

The active-site Proton acceptor is the His16. His16 contacts an anthocyanidin. 7 residues coordinate UDP-alpha-D-glucose: Gln337, His352, Trp355, Ser357, Glu360, Asp376, and Gln377.

The protein belongs to the UDP-glycosyltransferase family.

It catalyses the reaction (indol-3-yl)acetate + UDP-alpha-D-glucose = 1-O-(indol-3-ylacetyl)-beta-D-glucose + UDP. The protein operates within plant hormone metabolism; auxin conjugation. Possesses low catalytic activity in vitro. Also active as glucosyltransferase in vitro on benzoates and benzoate derivatives. This is UDP-glycosyltransferase 75B2 (UGT75B2) from Arabidopsis thaliana (Mouse-ear cress).